A 453-amino-acid polypeptide reads, in one-letter code: Na(+)/H(+) antiporter NhaA (453 aa).

Helical transmembrane passes span 28–48 (FLHIEAFSGVVLLLAAAAALI), 79–99 (LHFLINDGLMTIFFLVVGMEI), 115–135 (ALPLAAALGGVVVPALIYFIL), 144–164 (GWAVPTATDIAFAVGVLALLG), 173–193 (VFLLALAIIDDIVAVLIIAVF), 196–216 (GGMDYSGFIIAAVGILMVLGM), 241–261 (TGAHPTLAGVVLGLMTPVFAP), 321–341 (VAFGIMPLFALANAGVSLDGI), 355–375 (VLIALVAGKPLGIIGASFLMV), 393–413 (LVGLLAGIGFTMSIFIATLAF), and 424–444 (LGILLASLSAAVLGLAWGFFQ).

The protein belongs to the NhaA Na(+)/H(+) (TC 2.A.33) antiporter family.

It is found in the cell inner membrane. It catalyses the reaction Na(+)(in) + 2 H(+)(out) = Na(+)(out) + 2 H(+)(in). Functionally, na(+)/H(+) antiporter that extrudes sodium in exchange for external protons. The polypeptide is Na(+)/H(+) antiporter NhaA (Janthinobacterium sp. (strain Marseille) (Minibacterium massiliensis)).